We begin with the raw amino-acid sequence, 315 residues long: tRNA-specific adenosine deaminase subunit tad3 (315 aa).

A CMP/dCMP-type deaminase domain is found at 158–299; the sequence is KRIESILEDL…AELNHRYLAY (142 aa). Zn(2+) is bound by residues His211, Cys253, and Cys256.

Belongs to the cytidine and deoxycytidylate deaminase family. ADAT3 subfamily. As to quaternary structure, heterodimer with Tad2.

The protein resides in the cytoplasm. It localises to the nucleus. In terms of biological role, structural subunit of tRNA-specific adenosine deaminase, which deaminates adenosine-34 (the first, also called wobble position of the anticodon) to inosine in many tRNAs. Inosine-34 allows the decoding of 3 different nucleotides at the third position of mRNA codons, as inosine is able to pair with U, C, and A. The wobble inosine tRNA modification is essential for cell cycle progression in the G1/S and G2/M transitions in fission yeast. This chain is tRNA-specific adenosine deaminase subunit tad3 (tad3), found in Schizosaccharomyces pombe (strain 972 / ATCC 24843) (Fission yeast).